The primary structure comprises 479 residues: GTPase Obg (479 aa).

The Obg domain maps to 2–159 (PRFVDRVVIH…RDLTLELKSV (158 aa)). Residues 160–341 (ADVGLIGFPS…LIFGLWQMIS (182 aa)) form the OBG-type G domain. GTP-binding positions include 166–173 (GFPSAGKS), 191–195 (FTTLV), 212–215 (DVPG), 292–295 (NKID), and 322–324 (STV). Residues S173 and T193 each contribute to the Mg(2+) site. The region spanning 359–437 (PVPVDDSGFT…IGGMTFDWEP (79 aa)) is the OCT domain. Residues 438–479 (QKPAGHPVAMSGRGTDARLESTDPVGTAERKVARHQRHKHGG) form a disordered region. Basic residues predominate over residues 469–479 (VARHQRHKHGG).

The protein belongs to the TRAFAC class OBG-HflX-like GTPase superfamily. OBG GTPase family. As to quaternary structure, monomer. The cofactor is Mg(2+).

It is found in the cytoplasm. An essential GTPase which binds GTP, GDP and possibly (p)ppGpp with moderate affinity, with high nucleotide exchange rates and a fairly low GTP hydrolysis rate. Plays a role in control of the cell cycle, stress response, ribosome biogenesis and in those bacteria that undergo differentiation, in morphogenesis control. The protein is GTPase Obg of Mycobacterium leprae (strain Br4923).